A 503-amino-acid polypeptide reads, in one-letter code: DEAD-box ATP-dependent RNA helicase CshA (503 aa).

The short motif at 2 to 30 (QNFKELGISDKTVETLEAMGFKEPTPIQK) is the Q motif element. One can recognise a Helicase ATP-binding domain in the interval 33–203 (IPYTLEGKDI…QQFMKSPQIV (171 aa)). An ATP-binding site is contributed by 46 to 53 (AQTGTGKT). The DEAD box motif lies at 150–153 (DEAD). The Helicase C-terminal domain occupies 214–375 (QIDEYYTIVK…LRPPHRKEVL (162 aa)). The disordered stretch occupies residues 436–503 (EKPLARKNRQ…KGRTFADLQK (68 aa)). Residues 466 to 480 (KRSKGNFNKKKGKKT) show a composition bias toward basic residues. The segment covering 481–490 (DRRERQDKGR) has biased composition (basic and acidic residues).

This sequence belongs to the DEAD box helicase family. CshA subfamily. Oligomerizes, may be a member of the RNA degradosome.

The protein localises to the cytoplasm. It carries out the reaction ATP + H2O = ADP + phosphate + H(+). Functionally, DEAD-box RNA helicase possibly involved in RNA degradation. Unwinds dsRNA in both 5'- and 3'-directions, has RNA-dependent ATPase activity. This is DEAD-box ATP-dependent RNA helicase CshA from Staphylococcus haemolyticus (strain JCSC1435).